Consider the following 146-residue polypeptide: Hemoglobin subunit beta-S/F (146 aa).

Val-1 carries the post-translational modification N-acetylvaline. The Globin domain maps to 2–146; the sequence is HLTDGEKNAI…VANALSHKYH (145 aa). A Phosphoserine modification is found at Ser-44. Position 59 is an N6-acetyllysine (Lys-59). His-63 provides a ligand contact to heme b. At Lys-82 the chain carries N6-acetyllysine. A heme b-binding site is contributed by His-92. Residue Cys-93 is modified to S-nitrosocysteine. Lys-144 is subject to N6-acetyllysine.

The protein belongs to the globin family. In terms of assembly, heterotetramer of two alpha chains and two beta chains. Red blood cells.

Functionally, involved in oxygen transport from the lung to the various peripheral tissues. In Urocitellus townsendii (Townsend's ground squirrel), this protein is Hemoglobin subunit beta-S/F.